The chain runs to 172 residues: MSSSQNNNSSWIDWFLGIKGNQFLCRVPTDYVQDTFNQMGLEYFSEILDVILKPVIDSSSGLLYGDEKKWYGMIHARYIRAERGLIAMHRKYMRGDFGSCPNISCDRQNTLPVGLSAVWGKSTVKIHCPRCKSNFHPKSDTQLDGAMFGPSFPDIFFSLLPNLTSPLDDPRT.

Belongs to the casein kinase 2 subunit beta family. In terms of assembly, interacts in vitro with the casein kinase 2 alpha subunit (CkII-alpha). The relevance of such interaction is however unclear in vivo. As to expression, probably not expressed in wild-type flies. In males lacking the Y chromosome, it is testis-specific and constitutes the main component of star-shaped crystals.

Its function is as follows. Unknown. In males lacking the Y chromosome, its strong overexpression leads to the appearance of proteinaceous star-shaped crystals in the primary spermatocytes causing meiotic drive, possibly by interfering with normal casein kinase 2 activity. The chain is Stellate protein CG33247 (Ste:CG33247) from Drosophila melanogaster (Fruit fly).